Reading from the N-terminus, the 142-residue chain is Putative pre-16S rRNA nuclease (142 aa).

Belongs to the YqgF nuclease family.

It is found in the cytoplasm. Its function is as follows. Could be a nuclease involved in processing of the 5'-end of pre-16S rRNA. This is Putative pre-16S rRNA nuclease from Staphylococcus aureus (strain JH1).